A 266-amino-acid chain; its full sequence is Enterotoxin type C-2 (266 aa).

Positions 1-27 are cleaved as a signal peptide; it reads MNKSRFISCVILIFALILVLFTPNVLA. Residues Asp36, His74, Glu98, Glu107, and Asp110 each contribute to the Zn(2+) site. A disulfide bridge connects residues Cys120 and Cys137. Zn(2+) contacts are provided by His145, Glu146, and His149.

Belongs to the staphylococcal/streptococcal toxin family. As to quaternary structure, interacts with host MHC class II molecules composed of alpha/HLA-DRA and beta/HLA-DRB1 chains. The cofactor is Zn(2+).

Its subcellular location is the secreted. Functionally, staphylococcal enterotoxin that activates the host immune system by binding as unprocessed molecules to major histocompatibility (MHC) complex class II and T-cell receptor (TCR) molecules. In turn, this ternary complex activates a large number of T-lymphocytes initiating a systemic release of pro-inflammatory cytokines. Also causes the intoxication staphylococcal food poisoning syndrome. The protein is Enterotoxin type C-2 (entC2) of Staphylococcus aureus.